The chain runs to 654 residues: Translation factor GUF1, mitochondrial (654 aa).

One can recognise a tr-type G domain in the interval 57-237 (ENYRNFSIVA…SVIKNIPSPV (181 aa)). Residues 66–73 (AHVDHGKS), 130–134 (DTPGH), and 184–187 (NKID) each bind GTP.

It belongs to the TRAFAC class translation factor GTPase superfamily. Classic translation factor GTPase family. LepA subfamily.

The protein localises to the mitochondrion inner membrane. The catalysed reaction is GTP + H2O = GDP + phosphate + H(+). Promotes mitochondrial protein synthesis. May act as a fidelity factor of the translation reaction, by catalyzing a one-codon backward translocation of tRNAs on improperly translocated ribosomes. Binds to mitochondrial ribosomes in a GTP-dependent manner. The polypeptide is Translation factor GUF1, mitochondrial (Candida albicans (strain WO-1) (Yeast)).